The following is a 628-amino-acid chain: Eukaryotic peptide chain release factor GTP-binding subunit ERF3B (628 aa).

The segment covering 1-10 (MDSGSSSSDS) has biased composition (low complexity). Disordered stretches follow at residues 1 to 49 (MDSG…SAFS), 72 to 124 (FLRG…LEGS), and 146 to 195 (LEES…VIVP). The 225-residue stretch at 201 to 425 (KEHVNVVFIG…YLDNLPNFNR (225 aa)) folds into the tr-type G domain. The interval 210-217 (GHVDAGKS) is G1. GTP is bound at residue 213-218 (DAGKST). Residues 266–270 (GKTVE) form a G2 region. Positions 287 to 290 (DAPG) are G3. GTP-binding positions include 349-352 (NKMD) and 391-393 (SGL). The segment at 349–352 (NKMD) is G4. Positions 391 to 393 (SGL) are G5.

It belongs to the TRAFAC class translation factor GTPase superfamily. Classic translation factor GTPase family. ERF3 subfamily. As to quaternary structure, component of the eRF1-eRF3-GTP ternary complex, composed of ETF1/ERF1 and ERF3 (GSPT1/ERF3A or GSPT2/ERF3B) and GTP. Component of the transient SURF (SMG1-UPF1-eRF1-eRF3) complex. Interacts with UPF1 and PABPC1. In terms of tissue distribution, highly expressed in IUCC stage II colorectal cancer (CRC).

Its subcellular location is the cytoplasm. The enzyme catalyses GTP + H2O = GDP + phosphate + H(+). In terms of biological role, GTPase component of the eRF1-eRF3-GTP ternary complex, a ternary complex that mediates translation termination in response to the termination codons UAA, UAG and UGA. GSPT2/ERF3B mediates ETF1/ERF1 delivery to stop codons: The eRF1-eRF3-GTP complex binds to a stop codon in the ribosomal A-site. GTP hydrolysis by GSPT2/ERF3B induces a conformational change that leads to its dissociation, permitting ETF1/ERF1 to accommodate fully in the A-site. Component of the transient SURF complex which recruits UPF1 to stalled ribosomes in the context of nonsense-mediated decay (NMD) of mRNAs containing premature stop codons. The polypeptide is Eukaryotic peptide chain release factor GTP-binding subunit ERF3B (GSPT2) (Homo sapiens (Human)).